Consider the following 97-residue polypeptide: Integration host factor subunit alpha (97 aa).

A disordered region spans residues 50–71; the sequence is FGNFTLRDKPQRPGRNPKTGEE.

This sequence belongs to the bacterial histone-like protein family. Heterodimer of an alpha and a beta chain.

In terms of biological role, this protein is one of the two subunits of integration host factor, a specific DNA-binding protein that functions in genetic recombination as well as in transcriptional and translational control. This Legionella pneumophila (strain Paris) protein is Integration host factor subunit alpha.